The chain runs to 209 residues: tRNA (guanine-N(7)-)-methyltransferase (209 aa).

3 residues coordinate S-adenosyl-L-methionine: glutamate 40, glutamate 65, and aspartate 114. Aspartate 114 is a catalytic residue. Residues aspartate 150 and 188 to 191 (TAFE) each bind substrate.

It belongs to the class I-like SAM-binding methyltransferase superfamily. TrmB family.

The enzyme catalyses guanosine(46) in tRNA + S-adenosyl-L-methionine = N(7)-methylguanosine(46) in tRNA + S-adenosyl-L-homocysteine. It functions in the pathway tRNA modification; N(7)-methylguanine-tRNA biosynthesis. Functionally, catalyzes the formation of N(7)-methylguanine at position 46 (m7G46) in tRNA. This Bdellovibrio bacteriovorus (strain ATCC 15356 / DSM 50701 / NCIMB 9529 / HD100) protein is tRNA (guanine-N(7)-)-methyltransferase.